The following is a 356-amino-acid chain: SERTA domain-containing protein 4 (356 aa).

Positions 33–53 (SYGGPSPPGPAQAPLQGDRGA) are disordered. The SERTA domain maps to 101–147 (IFEERAHILYMSLEKLKFIDDPEVYLRRSVLINNLMKRIHGEIIMQN). Low complexity predominate over residues 215 to 232 (TAASSPSASSSSSSSSSS). 3 disordered regions span residues 215-238 (TAAS…LPLP), 280-302 (KLND…HEPV), and 332-356 (WKKS…GSKI). The span at 280–292 (KLNDEKANDDTNR) shows a compositional bias: basic and acidic residues.

The polypeptide is SERTA domain-containing protein 4 (SERTAD4) (Homo sapiens (Human)).